We begin with the raw amino-acid sequence, 148 residues long: Large ribosomal subunit protein bL9 (148 aa).

The protein belongs to the bacterial ribosomal protein bL9 family.

In terms of biological role, binds to the 23S rRNA. This Pseudomonas aeruginosa (strain LESB58) protein is Large ribosomal subunit protein bL9.